The primary structure comprises 337 residues: HTH-type transcriptional repressor PurR (337 aa).

Residues 2 to 56 (ATIKDVAKLAAVSTTTVSHVINKTRFVAEATQKRVWEAVEELNYAPSAVARSLKC) enclose the HTH lacI-type domain. A DNA-binding region (H-T-H motif) is located at residues 4–23 (IKDVAKLAAVSTTTVSHVIN). The DNA-binding element occupies 48–56 (SAVARSLKC). Hypoxanthine-binding residues include Phe73, Lys189, Thr191, Phe220, and Asp276.

Homodimer.

The protein operates within purine metabolism; purine nucleotide biosynthesis [regulation]. Is the main repressor of the genes involved in the de novo synthesis of purine nucleotides, regulating purB, purC, purEK, purF, purHD, purL, purMN and guaBA expression. PurR is allosterically activated to bind its cognate DNA by binding the purine corepressors, hypoxanthine or guanine, thereby effecting transcription repression. The chain is HTH-type transcriptional repressor PurR from Aliivibrio fischeri (strain MJ11) (Vibrio fischeri).